A 220-amino-acid polypeptide reads, in one-letter code: Botcinic acid biosynthesis cluster B protein 12 (220 aa).

It participates in polyketide biosynthesis. In terms of biological role, part of the gene cluster B that mediates the biosynthesis of botcinic acid and its botcinin derivatives, acetate-derived polyketides that contribute to virulence when combined with the sesquiterpene botrydial. Botcinic acid and its derivatives have been shown to induce chlorosis and necrosis during host plant infection, but also have antifungal activities. Two polyketide synthases, BOA6 and BOA9, are involved in the biosynthesis of botcinins. BOA6 mediates the formation of the per-methylated tetraketide core by condensation of four units of malonyl-CoA with one unit of acetyl-CoA, which would be methylated in activated methylene groups to yield a bicyclic acid intermediate that could then either be converted to botrylactone derivatives or lose the starter acetate unit through a retro-Claisen type C-C bond cleavage to yield botcinin derivatives. The second polyketide synthase, BOA9, is probably required for the biosynthesis of the tetraketide side chain of botcinins. The methyltransferase (MT) domain within BOA6 is probably responsible for the incorporation of four methyl groups. The trans-enoyl reductase BOA5 might take over the enoyl reductase function of BOA6 that misses an ER domain. The monooxygenases BOA2, BOA3 and BOA4 might be involved in further hydroxylations at C4, C5 and C8, whereas BOA7, close to BOA9, could potentially be involved in the hydroxylation at C4 in the side chain of botcinins. The protein is Botcinic acid biosynthesis cluster B protein 12 of Botryotinia fuckeliana (strain B05.10) (Noble rot fungus).